The sequence spans 536 residues: Phosphoenolpyruvate carboxykinase (ATP) (536 aa).

Substrate is bound by residues R61, Y195, and K201. ATP-binding positions include K201, H220, and G236–T244. Residues K201 and H220 each contribute to the Mn(2+) site. Residue D257 coordinates Mn(2+). Residues E285, R323, and T448 each coordinate ATP. Substrate is bound at residue R323.

It belongs to the phosphoenolpyruvate carboxykinase (ATP) family. Mn(2+) serves as cofactor.

The protein localises to the cytoplasm. The catalysed reaction is oxaloacetate + ATP = phosphoenolpyruvate + ADP + CO2. It functions in the pathway carbohydrate biosynthesis; gluconeogenesis. Involved in the gluconeogenesis. Catalyzes the conversion of oxaloacetate (OAA) to phosphoenolpyruvate (PEP) through direct phosphoryl transfer between the nucleoside triphosphate and OAA. This chain is Phosphoenolpyruvate carboxykinase (ATP), found in Methylobacterium sp. (strain 4-46).